A 455-amino-acid polypeptide reads, in one-letter code: MAANVPPSAETLLSGAAAHPPKTAEEIANQYNLLPKLIPYLDRHLVFPLLEFSSGQDDEKEVVRAKYELLKHTNMTDYVANLWKEINNSDDIPDEFVKKREEVLAKLQQYEEESAKITQLLQDESVVANLRSDKVANLKFLEEQHGVTIEMVNSLYDYGRFQYSCGSYGNAAELLYQFRVLSTDNDKVASATWGKFASEILTTSWEAAMEEVQKVKDSIETRLFNNPLGQLQNRSWLIHWSLFPFFNHDPARDVLTDLFFSPAYINTIQTNCPWILRYLAAAVITNRNRAHKSSSVYQKQLKDLIRVVRQEGYEYNDPITDFVKALYVDFDFEEAQKKLGEAEDVLRSDFFLVSTTDAFVEAARHLISESYCKIHQRIDIKDLSTRLGLNQDEGEKWIVNLIRDTRVDAKIDYKEGTVIMNHPPQSVYQQVIEKTKGAFFRTQVLRFVRLLYPHD.

The 170-residue stretch at 256-425 (TDLFFSPAYI…GTVIMNHPPQ (170 aa)) folds into the PCI domain.

Belongs to the eIF-3 subunit E family. Component of the eukaryotic translation initiation factor 3 (eIF-3) complex.

It localises to the cytoplasm. Functionally, component of the eukaryotic translation initiation factor 3 (eIF-3) complex, which is involved in protein synthesis of a specialized repertoire of mRNAs and, together with other initiation factors, stimulates binding of mRNA and methionyl-tRNAi to the 40S ribosome. The eIF-3 complex specifically targets and initiates translation of a subset of mRNAs involved in cell proliferation. The sequence is that of Eukaryotic translation initiation factor 3 subunit E (int6) from Neosartorya fischeri (strain ATCC 1020 / DSM 3700 / CBS 544.65 / FGSC A1164 / JCM 1740 / NRRL 181 / WB 181) (Aspergillus fischerianus).